Consider the following 172-residue polypeptide: Stellate protein CG33243 (172 aa).

It belongs to the casein kinase 2 subunit beta family. In terms of assembly, interacts in vitro with the casein kinase 2 alpha subunit (CkII-alpha). The relevance of such interaction is however unclear in vivo. Probably not expressed in wild-type flies. In males lacking the Y chromosome, it is testis-specific and constitutes the main component of star-shaped crystals.

Functionally, unknown. In males lacking the Y chromosome, its strong overexpression leads to the appearance of proteinaceous star-shaped crystals in the primary spermatocytes causing meiotic drive, possibly by interfering with normal casein kinase 2 activity. This Drosophila melanogaster (Fruit fly) protein is Stellate protein CG33243 (Ste:CG33243).